The following is a 404-amino-acid chain: Acetylornithine/succinyldiaminopimelate aminotransferase (404 aa).

Residues Gly108–Ala109 and Phe141 contribute to the pyridoxal 5'-phosphate site. Arg144 is a N(2)-acetyl-L-ornithine binding site. Asp226–Gln229 is a pyridoxal 5'-phosphate binding site. Lys255 is modified (N6-(pyridoxal phosphate)lysine). Position 283 (Thr283) interacts with N(2)-acetyl-L-ornithine. Pyridoxal 5'-phosphate is bound at residue Thr284.

This sequence belongs to the class-III pyridoxal-phosphate-dependent aminotransferase family. ArgD subfamily. Homodimer. It depends on pyridoxal 5'-phosphate as a cofactor.

The protein resides in the cytoplasm. The enzyme catalyses N(2)-acetyl-L-ornithine + 2-oxoglutarate = N-acetyl-L-glutamate 5-semialdehyde + L-glutamate. It catalyses the reaction N-succinyl-(2S,6S)-2,6-diaminopimelate + 2-oxoglutarate = (S)-2-succinylamino-6-oxoheptanedioate + L-glutamate. It participates in amino-acid biosynthesis; L-arginine biosynthesis; N(2)-acetyl-L-ornithine from L-glutamate: step 4/4. Its pathway is amino-acid biosynthesis; L-lysine biosynthesis via DAP pathway; LL-2,6-diaminopimelate from (S)-tetrahydrodipicolinate (succinylase route): step 2/3. Involved in both the arginine and lysine biosynthetic pathways. This chain is Acetylornithine/succinyldiaminopimelate aminotransferase, found in Buchnera aphidicola subsp. Schizaphis graminum (strain Sg).